A 353-amino-acid polypeptide reads, in one-letter code: Uroporphyrinogen decarboxylase (353 aa).

Residues 29–33, D79, Y156, T211, and H329 contribute to the substrate site; that span reads RQAGR.

Belongs to the uroporphyrinogen decarboxylase family. As to quaternary structure, homodimer.

It localises to the cytoplasm. The enzyme catalyses uroporphyrinogen III + 4 H(+) = coproporphyrinogen III + 4 CO2. The protein operates within porphyrin-containing compound metabolism; protoporphyrin-IX biosynthesis; coproporphyrinogen-III from 5-aminolevulinate: step 4/4. Catalyzes the decarboxylation of four acetate groups of uroporphyrinogen-III to yield coproporphyrinogen-III. This is Uroporphyrinogen decarboxylase from Alcanivorax borkumensis (strain ATCC 700651 / DSM 11573 / NCIMB 13689 / SK2).